We begin with the raw amino-acid sequence, 61 residues long: Large ribosomal subunit protein eL37 (61 aa).

C20, C23, C35, and C38 together coordinate Zn(2+). A C4-type zinc finger spans residues 20–38 (CRRCGRRAYHVRKKRCAAC).

The protein belongs to the eukaryotic ribosomal protein eL37 family. The cofactor is Zn(2+).

Its function is as follows. Binds to the 23S rRNA. The protein is Large ribosomal subunit protein eL37 (rpl37e) of Methanocaldococcus jannaschii (strain ATCC 43067 / DSM 2661 / JAL-1 / JCM 10045 / NBRC 100440) (Methanococcus jannaschii).